Consider the following 254-residue polypeptide: NH(3)-dependent NAD(+) synthetase (254 aa).

Residue 29 to 36 (GLSGGIDS) coordinates ATP. D35 serves as a coordination point for Mg(2+). R115 provides a ligand contact to deamido-NAD(+). T135 is a binding site for ATP. E140 lines the Mg(2+) pocket. Positions 148 and 155 each coordinate deamido-NAD(+). Residues K164 and S186 each coordinate ATP. Deamido-NAD(+) is bound at residue 245-246 (HK).

Belongs to the NAD synthetase family. As to quaternary structure, homodimer.

The catalysed reaction is deamido-NAD(+) + NH4(+) + ATP = AMP + diphosphate + NAD(+) + H(+). The protein operates within cofactor biosynthesis; NAD(+) biosynthesis; NAD(+) from deamido-NAD(+) (ammonia route): step 1/1. In terms of biological role, catalyzes the ATP-dependent amidation of deamido-NAD to form NAD. Uses ammonia as a nitrogen source. The protein is NH(3)-dependent NAD(+) synthetase of Methanococcus aeolicus (strain ATCC BAA-1280 / DSM 17508 / OCM 812 / Nankai-3).